The sequence spans 275 residues: MMNKLCFALPLIFSDASFANGPAQRIISLAPHSTEIAYSAGLGDKLIAVSEMSDYPEQAKDLEKVSNYQGIKLERIIALQPDLVIAWPAGNPAKELEKLEQFGIPIYYSTTGTLEGIATNIEQLSQYSEKPEVGQKAAAEFRAQLEALKEKYNTEDKVSYFYQLSEKPIITVAGKNWPSEVFTFCGGENIFSKGSAPYPQVSIEQVITRQPEVLFASRHAMSNDGMWAEWKNDIPALGNNHVWSLNSDWINRPTSRTLNAITEVCEHFETVRQKR.

An N-terminal signal peptide occupies residues 1-19 (MMNKLCFALPLIFSDASFA). Residues 25 to 272 (RIISLAPHST…EVCEHFETVR (248 aa)) form the Fe/B12 periplasmic-binding domain. The cysteines at positions 185 and 265 are disulfide-linked.

Belongs to the BtuF family. In terms of assembly, the complex is composed of two ATP-binding proteins (BtuD), two transmembrane proteins (BtuC) and a solute-binding protein (BtuF).

The protein resides in the periplasm. Its function is as follows. Part of the ABC transporter complex BtuCDF involved in vitamin B12 import. Binds vitamin B12 and delivers it to the periplasmic surface of BtuC. The sequence is that of Vitamin B12-binding protein from Vibrio campbellii (strain ATCC BAA-1116).